The primary structure comprises 536 residues: GMP synthase [glutamine-hydrolyzing] (536 aa).

A Glutamine amidotransferase type-1 domain is found at 19–212 (RILILDFGSQ…VHEICDCAGS (194 aa)). Catalysis depends on Cys96, which acts as the Nucleophile. Catalysis depends on residues His186 and Glu188. The 199-residue stretch at 213–411 (WTPDNIIDMR…LGLPAKMINR (199 aa)) folds into the GMPS ATP-PPase domain. ATP is bound at residue 240–246 (SGGVDSS).

As to quaternary structure, homodimer.

It carries out the reaction XMP + L-glutamine + ATP + H2O = GMP + L-glutamate + AMP + diphosphate + 2 H(+). It participates in purine metabolism; GMP biosynthesis; GMP from XMP (L-Gln route): step 1/1. Functionally, catalyzes the synthesis of GMP from XMP. The chain is GMP synthase [glutamine-hydrolyzing] from Psychrobacter arcticus (strain DSM 17307 / VKM B-2377 / 273-4).